The following is a 297-amino-acid chain: 33 kDa chaperonin (297 aa).

Disulfide bonds link Cys-239-Cys-241 and Cys-272-Cys-275.

Belongs to the HSP33 family. Post-translationally, under oxidizing conditions two disulfide bonds are formed involving the reactive cysteines. Under reducing conditions zinc is bound to the reactive cysteines and the protein is inactive.

It localises to the cytoplasm. Redox regulated molecular chaperone. Protects both thermally unfolding and oxidatively damaged proteins from irreversible aggregation. Plays an important role in the bacterial defense system toward oxidative stress. This chain is 33 kDa chaperonin, found in Synechococcus elongatus (strain ATCC 33912 / PCC 7942 / FACHB-805) (Anacystis nidulans R2).